We begin with the raw amino-acid sequence, 188 residues long: Peroxiredoxin y4vD (188 aa).

Residues 2-152 form the Thioredoxin domain; the sequence is PVKKRVPFVA…VEQWFEEEGF (151 aa). The active-site Cysteine sulfenic acid (-SOH) intermediate (for peroxiredoxin activity) is C56.

Belongs to the peroxiredoxin family. Prx5 subfamily. Monomer.

The catalysed reaction is a hydroperoxide + 2 glutathione = an alcohol + glutathione disulfide + H2O. Thiol-specific peroxidase that catalyzes the reduction of hydrogen peroxide and organic hydroperoxides to water and alcohols, respectively. Plays a role in cell protection against oxidative stress by detoxifying peroxides. The chain is Peroxiredoxin y4vD from Sinorhizobium fredii (strain NBRC 101917 / NGR234).